The chain runs to 373 residues: Asporin (373 aa).

Residues 1–15 (MKEYVMLLLLAVCSA) form the signal peptide. Positions 16–32 (KPFFSPSHTALKNMMLK) are excised as a propeptide. A glycan (O-linked (GalNAc...) serine) is linked at Ser-48. An LRRNT domain is found at 59-95 (FFPFDLFPTCPFGCQCYSRVVHCSDLGLTSVPNNIPF). Disulfide bonds link Cys-68–Cys-74 and Cys-72–Cys-81. LRR repeat units lie at residues 96-117 (DTRMVDLQNNKIKEIKENDFKG), 120-141 (SLYALILNNNKLTKIHPKTFLT), 144-166 (KLRRLYLSHNQLSEIPLNLPKSL), 167-186 (AELRIHDNKVKKIQKDTFKG), 189-212 (ALHVLEMSANPLENNGIEPGAFEG), 235-255 (TLLELHLDFNKISTVELEDLK), 259-280 (ELQRLGLGNNRITDIENGTFAN), 283-305 (RVREIHLEHNKLKKIPSGLQELK), 306-327 (YLQIIFLHYNSIAKVGVNDFCP), 328-349 (TVPKMKKSLYSAISLFNNPMKY), and 350-373 (WEIQPATFRCVLGRMSVQLGNVGK). The tract at residues 159–205 (PLNLPKSLAELRIHDNKVKKIQKDTFKGMNALHVLEMSANPLENNGI) is interaction with TGFB1. The N-linked (GlcNAc...) asparagine glycan is linked to Asn-275. Cys-326 and Cys-359 are joined by a disulfide.

Belongs to the small leucine-rich proteoglycan (SLRP) family. SLRP class I subfamily. In terms of assembly, interacts with type I collagen. DCN can inhibit collagen binding. Interacts with TGFB1, TGFB2 and TGFB3. DCN, BGN, and FMOD inhibit binding to TGFB1. Interacts with BMP2. Interacts in vitro with type II collagen. In terms of tissue distribution, higher expression in heart, also detected in kidney, stomach, testes, and skin but only weakly in lung, skeletal muscle, small intestine, and thymus. Expressed specifically and predominantly in the periodontal ligament (PDL). During tooth development, strong expression is seen in the dental follicle, which is the progenitor tissue that forms cementum, alveolar bone, and the PDL. Expressed in the perichondria of the maxilla, mandible, vertebrae, and long bones. Predominantly expressed in the perichondrium/periosteum of long bones (at protein level).

The protein resides in the secreted. Its subcellular location is the extracellular space. It localises to the extracellular matrix. In terms of biological role, binds calcium and plays a role in osteoblast-driven collagen biomineralization activity. Critical regulator of TGF-beta in articular cartilage and plays an essential role in cartilage homeostasis and osteoarthritis (OA) pathogenesis. Negatively regulates chondrogenesis in the articular cartilage by blocking the TGF-beta/receptor interaction on the cell surface and inhibiting the canonical TGF-beta/Smad signal. Negatively regulates periodontal ligament (PDL) differentiation and mineralization to ensure that the PDL is not ossified and to maintain homeostasis of the tooth-supporting system. Inhibits BMP2-induced cytodifferentiation of PDL cells by preventing its binding to BMPR1B/BMP type-1B receptor, resulting in inhibition of BMP-dependent activation of SMAD proteins. Inhibits the interaction between TGFB1 and TGF-beta receptor type II in the presence of heparin/heparan sulfate in vitro. This chain is Asporin (Aspn), found in Mus musculus (Mouse).